A 134-amino-acid polypeptide reads, in one-letter code: MKVVHTVGKRRTAIARATAKEGSGKIRINKKPLELMEPKYIKMKLMEPVILAGEALSNIDVDIDVKGGGIVSQMDATRTALGKAIVEFTGKMELKEKFLSYDRTLLVSDARRTEPHKPSKSSKGPRAKRQKSYR.

The interval 109-134 (DARRTEPHKPSKSSKGPRAKRQKSYR) is disordered. A compositionally biased stretch (basic residues) spans 118–134 (PSKSSKGPRAKRQKSYR).

This sequence belongs to the universal ribosomal protein uS9 family.

The polypeptide is Small ribosomal subunit protein uS9 (Methanococcus maripaludis (strain C7 / ATCC BAA-1331)).